The sequence spans 426 residues: Serine--tRNA ligase (426 aa).

Residue T233–E235 participates in L-serine binding. Position 264–266 (R264–E266) interacts with ATP. E287 provides a ligand contact to L-serine. Residue E351–S354 coordinates ATP. S387 serves as a coordination point for L-serine.

It belongs to the class-II aminoacyl-tRNA synthetase family. Type-1 seryl-tRNA synthetase subfamily. Homodimer. The tRNA molecule binds across the dimer.

It localises to the cytoplasm. It catalyses the reaction tRNA(Ser) + L-serine + ATP = L-seryl-tRNA(Ser) + AMP + diphosphate + H(+). The enzyme catalyses tRNA(Sec) + L-serine + ATP = L-seryl-tRNA(Sec) + AMP + diphosphate + H(+). The protein operates within aminoacyl-tRNA biosynthesis; selenocysteinyl-tRNA(Sec) biosynthesis; L-seryl-tRNA(Sec) from L-serine and tRNA(Sec): step 1/1. Functionally, catalyzes the attachment of serine to tRNA(Ser). Is also able to aminoacylate tRNA(Sec) with serine, to form the misacylated tRNA L-seryl-tRNA(Sec), which will be further converted into selenocysteinyl-tRNA(Sec). The sequence is that of Serine--tRNA ligase from Clostridium botulinum (strain Okra / Type B1).